The primary structure comprises 1316 residues: Serine/threonine-protein kinase 36 (1316 aa).

The Protein kinase domain maps to 4–254; it reads YHVLEMIGEG…WPDLLHHPFI (251 aa). ATP-binding positions include 10-18 and Lys-33; that span reads IGEGSFGRV. The active-site Proton acceptor is the Asp-125. Residues 389–418 are disordered; the sequence is QGFPEPRPEAMGRQSTDVVDPENEEPDSDD. The span at 407 to 418 shows a compositional bias: acidic residues; that stretch reads VDPENEEPDSDD.

It belongs to the protein kinase superfamily. Ser/Thr protein kinase family. As to quaternary structure, interacts with SPAG16 and KIF27. Mg(2+) serves as cofactor. In terms of tissue distribution, weakly expressed in the heart and thymus, present at moderate to high levels in the lungs, pancreas, and kidneys and at higher levels in the brain and cerebellum. Very highly expressed in the testis.

It localises to the cytoplasm. The protein localises to the nucleus. The protein resides in the cytoskeleton. It is found in the cilium axoneme. It carries out the reaction L-seryl-[protein] + ATP = O-phospho-L-seryl-[protein] + ADP + H(+). It catalyses the reaction L-threonyl-[protein] + ATP = O-phospho-L-threonyl-[protein] + ADP + H(+). In terms of biological role, serine/threonine protein kinase which plays an important role in the sonic hedgehog (Shh) pathway by regulating the activity of GLI transcription factors. Controls the activity of the transcriptional regulators GLI1, GLI2 and GLI3 by opposing the effect of SUFU and promoting their nuclear localization. GLI2 requires an additional function of STK36 to become transcriptionally active, but the enzyme does not need to possess an active kinase catalytic site for this to occur. Required for postnatal development, possibly by regulating the homeostasis of cerebral spinal fluid or ciliary function. Essential for construction of the central pair apparatus of motile cilia. The protein is Serine/threonine-protein kinase 36 of Mus musculus (Mouse).